The chain runs to 279 residues: Pleckstrin homology domain-containing family F member 1 (279 aa).

Residues 35 to 131 form the PH domain; the sequence is VLLGEGVLTK…WISHIEECVR (97 aa). The segment at 152–212 adopts an FYVE-type zinc-finger fold; it reads DKATDICMRC…VCSLCYRELA (61 aa). Zn(2+) is bound by residues Cys158, Cys161, Cys175, Cys178, Cys183, Cys186, Cys204, and Cys207. The interval 218–264 is disordered; the sequence is EEAEEQGAGSPGQPAHLARPICGASSGDDDDSDEDKEGSRDGDWPSS. A compositionally biased stretch (acidic residues) spans 244 to 253; that stretch reads GDDDDSDEDK.

As to expression, highly expressed in heart and skeletal muscle. Weakly expressed in brain, thymus, spleen, kidney, liver, small intestine, placenta and lung.

Its subcellular location is the nucleus. It localises to the cytoplasm. It is found in the perinuclear region. The protein localises to the lysosome. Functionally, may induce apoptosis through the lysosomal-mitochondrial pathway. Translocates to the lysosome initiating the permeabilization of lysosomal membrane (LMP) and resulting in the release of CTSD and CTSL to the cytoplasm. Triggers the caspase-independent apoptosis by altering mitochondrial membrane permeabilization (MMP) resulting in the release of PDCD8. The polypeptide is Pleckstrin homology domain-containing family F member 1 (PLEKHF1) (Homo sapiens (Human)).